Here is a 443-residue protein sequence, read N- to C-terminus: KH domain-containing, RNA-binding, signal transduction-associated protein 1 (443 aa).

Residues 1–94 are disordered; sequence MQRRDDPASR…PLLPPSATAA (94 aa). Phosphoserine is present on residues S18 and S20. At K21 the chain carries N6-acetyllysine. Phosphoserine is present on S29. Phosphothreonine is present on T33. 2 positions are modified to asymmetric dimethylarginine; by PRMT1: R45 and R52. S58 is modified (phosphoserine; by MAPK1). The span at 61–72 shows a compositional bias: pro residues; sequence TQPPPLLPPSTP. 2 positions are modified to phosphothreonine; by MAPK1: T71 and T84. Over residues 81–94 the composition is skewed to low complexity; sequence SAPTPLLPPSATAA. Glycyl lysine isopeptide (Lys-Gly) (interchain with G-Cter in SUMO2) cross-links involve residues K96 and K102. Residues 100-260 form an involved in homodimerization region; the sequence is ENKYLPELMA…VKKFLVPDMM (161 aa). At S113 the chain carries Phosphoserine. Residue K139 forms a Glycyl lysine isopeptide (Lys-Gly) (interchain with G-Cter in SUMO2) linkage. Phosphoserine is present on S150. A KH domain is found at 171–197; it reads NFVGKILGPQGNTIKRLQEETGAKISV. Residue K175 is modified to N6-acetyllysine; alternate. A Glycyl lysine isopeptide (Lys-Gly) (interchain with G-Cter in SUMO2); alternate cross-link involves residue K175. A Phosphothreonine modification is found at T183. Residues 280–317 form a disordered region; it reads PSRGRGVSVRGRGAAPPPPPVPRGRGVGPPRGALVRGT. Omega-N-methylarginine is present on residues R282, R284, and R291. A compositionally biased stretch (low complexity) spans 283-293; that stretch reads GRGVSVRGRGA. Asymmetric dimethylarginine is present on R304. A compositionally biased stretch (low complexity) spans 307-316; it reads GPPRGALVRG. Omega-N-methylarginine; by PRMT1 is present on residues R310 and R315. R320 is subject to Dimethylated arginine; alternate. At R320 the chain carries Omega-N-methylarginine; by PRMT1; alternate. R325 carries the omega-N-methylarginine; by PRMT1 modification. Positions 326–345 are disordered; that stretch reads GATVTRGVPPPPTVRGAPTP. Residues R331 and R340 each carry the dimethylated arginine; alternate modification. 2 positions are modified to omega-N-methylarginine; by PRMT1; alternate: R331 and R340. Position 331 is an asymmetric dimethylarginine; alternate (R331). The interval 351–443 is interaction with HNRNPA1; that stretch reads GIQRIPLPPT…AYREHPYGRY (93 aa). Y387 carries the post-translational modification Phosphotyrosine. A Phosphoserine modification is found at S390. Residues 400–420 form an interaction with ZBTB7A region; it reads GHGELQDSYEAYGQDDWNGTR. The segment at 411–443 is disordered; the sequence is YGQDDWNGTRPSLKAPPARPVKGAYREHPYGRY. K432 participates in a covalent cross-link: Glycyl lysine isopeptide (Lys-Gly) (interchain with G-Cter in SUMO2). Positions 434 to 443 are enriched in basic and acidic residues; the sequence is AYREHPYGRY. A phosphotyrosine; by PTK6 mark is found at Y435, Y440, and Y443.

This sequence belongs to the KHDRBS family. As to quaternary structure, self-associates to form homooligomers when bound to RNA, oligomerization appears to be limited when binding to proteins. Forms a trimeric complex in the nucleus consisting of BANP, HDAC6 and KHDRBS1/SAM68; HDAC6 keeps KHDRBS1 in a deacetylated state which inhibits the inclusion of CD44 alternate exons. The complex is disrupted by MAPK1/MAPK3-mediated phosphorylation of BANP which results in BANP export to the cytoplasm. This facilitates acetylation of KHDRBS1 and CD44 variant exon inclusion. Interacts with KHDRBS3/SLIM-2 and KHDRBS2/SLIM-1; heterooligomer formation of KHDRBS family proteins may modulate RNA substrate specificity. Interacts with RASA1, FYN, GRB2, PLCG1, SRC, CBP and PRMT1. Interacts with PTK6 (via SH3 and SH2 domains). Forms a complex with ILF2, ILF3, YLPM1, RBMX, NCOA5 and PPP1CA. Binds WBP4/FBP21 (via WW domains), FNBP4/FBP30 (via WW domains). Interacts (via Arg/Gly-rich-flanked Pro-rich regions) with FYN (via the SH3 domain). Interacts with APC, HNRNPA1. Interacts with the non-receptor tyrosine kinase SRMS; the interaction leads to phosphorylation of KHDRBS1. Interacts with ZBTB7A; negatively regulates KHDRBS1 splicing activity toward BCL2L1. Tyrosine phosphorylated by several non-receptor tyrosine kinases including LCK, FYN and JAK3. Also tyrosine phosphorylated by the non-receptor tyrosine kinase SRMS in an EGF-dependent manner. Phosphorylation by PTK6 negatively regulates its RNA binding ability. Phosphorylation by PTK6 at Tyr-440 dictates the nuclear localization of KHDRBS1. Phosphorylation by MAPK1 at Ser-58, Thr-71 and Thr-84 regulates CD44 alternative splicing by promoting CD44 exon v5 inclusion. Post-translationally, acetylated. Positively correlates with ability to bind RNA. Deacetylated by HDAC6; this regulates alternative splicing by inhibiting the inclusion of CD44 alternate exons. In terms of processing, arginine methylation is required for nuclear localization. Inhibits interaction with Src-like SH3 domains, but not interaction with WW domains of WBP4/FBP21 and FNBP4/FBP30. In terms of tissue distribution, in adult cerebellum expressed in most neuronal cell populations, specifically in cerebellar granule cells of the internal granular layer, ROR(alpha)-positive Purkinje cells, internal granular layer and molecular layer interneurons (at protein level).

It localises to the nucleus. It is found in the cytoplasm. The protein resides in the membrane. In terms of biological role, recruited and tyrosine phosphorylated by several receptor systems, for example the T-cell, leptin and insulin receptors. Once phosphorylated, functions as an adapter protein in signal transduction cascades by binding to SH2 and SH3 domain-containing proteins. Role in G2-M progression in the cell cycle. Represses CBP-dependent transcriptional activation apparently by competing with other nuclear factors for binding to CBP. Also acts as a putative regulator of mRNA stability and/or translation rates and mediates mRNA nuclear export. Positively regulates the association of constitutive transport element (CTE)-containing mRNA with large polyribosomes and translation initiation. May not be involved in the nucleocytoplasmic export of unspliced (CTE)-containing RNA species. RNA-binding protein that plays a role in the regulation of alternative splicing and influences mRNA splice site selection and exon inclusion. Binds to RNA containing 5'-[AU]UAA-3' as a bipartite motif spaced by more than 15 nucleotides. Binds poly(A). In cooperation with HNRNPA1 modulates alternative splicing of BCL2L1 by promoting splicing toward isoform Bcl-X(S), and of SMN1. Can regulate CD44 alternative splicing in a Ras pathway-dependent manner. Can regulate alternative splicing of NRXN1 and NRXN3 in the laminin G-like domain 6 containing the evolutionary conserved neurexin alternative spliced segment 4 (AS4) involved in neurexin selective targeting to postsynaptic partners. In a neuronal activity-dependent manner cooperates synergistically with KHDRBS2/SLIM-1 in regulation of NRXN1 exon skipping at AS4. The cooperation with KHDRBS2/SLIM-1 is antagonistic for regulation of NXRN3 alternative splicing at AS4. This Mus musculus (Mouse) protein is KH domain-containing, RNA-binding, signal transduction-associated protein 1.